The following is a 442-amino-acid chain: Trigger factor (442 aa).

The PPIase FKBP-type domain maps to 165–250 (DDRVIIDFEG…LQKVMAPELP (86 aa)).

The protein belongs to the FKBP-type PPIase family. Tig subfamily.

It is found in the cytoplasm. The catalysed reaction is [protein]-peptidylproline (omega=180) = [protein]-peptidylproline (omega=0). Functionally, involved in protein export. Acts as a chaperone by maintaining the newly synthesized protein in an open conformation. Functions as a peptidyl-prolyl cis-trans isomerase. The polypeptide is Trigger factor (Coxiella burnetii (strain CbuK_Q154) (Coxiella burnetii (strain Q154))).